A 106-amino-acid chain; its full sequence is Cell division protein FtsB (106 aa).

The Cytoplasmic segment spans residues 1-3 (MRL). The chain crosses the membrane as a helical span at residues 4 to 21 (LTLIFVALIALLQYPLWL). Topologically, residues 22–106 (GKGSWLRVWD…SPPAALTGAQ (85 aa)) are periplasmic. Positions 31-73 (DLNQKIVAQKAVNAELKLRNDTLDAEVRDLKQGNAAIEERARS) form a coiled coil.

The protein belongs to the FtsB family. As to quaternary structure, part of a complex composed of FtsB, FtsL and FtsQ.

Its subcellular location is the cell inner membrane. In terms of biological role, essential cell division protein. May link together the upstream cell division proteins, which are predominantly cytoplasmic, with the downstream cell division proteins, which are predominantly periplasmic. In Methylobacillus flagellatus (strain ATCC 51484 / DSM 6875 / VKM B-1610 / KT), this protein is Cell division protein FtsB.